The chain runs to 114 residues: Gas vesicle protein J1 (114 aa).

Residues 13 to 22 (LAEMLEMLLD) form an alpha helix 1 region. Beta-strand stretches follow at residues 25-35 (VVVNADIAVSV) and 40-50 (LLGIELRAAIA). Positions 46 to 50 (RAAIA) match the Conserved in GvpM1/2 but not GvpA motif. Alpha helix stretches follow at residues 52–72 (FETAAEYGLEFPTGTDMERVE), 78–87 (SPDQSDPASE), and 95–105 (TNPLSDDSTPT). Residues 63 to 114 (PTGTDMERVESAANISPDQSDPASETQSETESTNPLSDDSTPTASTSAEETK) are disordered. The segment covering 75-98 (ANISPDQSDPASETQSETESTNPL) has biased composition (polar residues). Over residues 99-114 (SDDSTPTASTSAEETK) the composition is skewed to low complexity.

This sequence belongs to the gas vesicle GvpA family. GvpF to GvpM interact with each other in vitro, and may form multi-subunit complex(es). Interacts with GvpA1.

The protein resides in the gas vesicle. Functionally, proteins GvpF to GvpM might be involved in nucleating gas vesicle formation. Mutagenesis of residues 13-61 shows that almost none of them can be substituted and still make gas vesicles. A minor component of the gas vesicle. Gas vesicles are hollow, gas filled proteinaceous nanostructures found in several microbial planktonic microorganisms. They allow positioning of halobacteria at the optimal depth for growth in the poorly aerated, shallow brine pools of their habitat. In terms of biological role, expression of a 9.5 kb p-vac DNA fragment containing 2 divergently transcribed regions (gvpD-gvpE-gvpF-gvpG-gvpH-gvpI-gvpJ-gvpK-gvpL-gvpM and gvpA-gvpC-gvpN-gvpO) allows H.volcanii to produce gas vesicles. All site-directed mutagenesis is tested in H.volcanii. A minimal gas vesicle can be made in H.volcanii by gvpA1-gvpO1 plus gvpF1-gvpG1-gvpJ1-gvpK1-gvpL1-gvpM1; lack of enough GvpJ1 prevents formation. A similar region restores gas vesicle production in H.halobium without the p-vac locus, but it still has the c-vac locus. This chain is Gas vesicle protein J1 (gvpJ11), found in Halobacterium salinarum (strain ATCC 700922 / JCM 11081 / NRC-1) (Halobacterium halobium).